The following is a 278-amino-acid chain: uncharacterized protein (278 aa).

Pro residues predominate over residues 127–151; it reads PPTPSPPPPPAPTQPTRPTPGPAFF. The interval 127–174 is disordered; sequence PPTPSPPPPPAPTQPTRPTPGPAFFPQPFKVELHHPTPKTSSLPAPSL. Residues 164 to 174 show a composition bias toward low complexity; that stretch reads PKTSSLPAPSL.

This is an uncharacterized protein from Botryotinia fuckeliana (Noble rot fungus).